Reading from the N-terminus, the 238-residue chain is Opacity protein opA68 (238 aa).

A1 is a signal peptide. Residues 88-109 (NLQRRTSNGNRRDRKTENQENG) are disordered.

This sequence belongs to the opacity porin family.

Its subcellular location is the cell outer membrane. Functionally, implicated in a number of adherence functions. OPA proteins are implicated in pathogenesis and are subject to phase variation. The polypeptide is Opacity protein opA68 (Neisseria gonorrhoeae).